The following is a 359-amino-acid chain: DNA polymerase IV (359 aa).

Positions 7 to 188 (IIHIDMDAFY…LPIGKFFGVG (182 aa)) constitute a UmuC domain. Residues D11 and D106 each contribute to the Mg(2+) site. Residue E107 is part of the active site.

The protein belongs to the DNA polymerase type-Y family. In terms of assembly, monomer. Mg(2+) is required as a cofactor.

Its subcellular location is the cytoplasm. The enzyme catalyses DNA(n) + a 2'-deoxyribonucleoside 5'-triphosphate = DNA(n+1) + diphosphate. Functionally, poorly processive, error-prone DNA polymerase involved in untargeted mutagenesis. Copies undamaged DNA at stalled replication forks, which arise in vivo from mismatched or misaligned primer ends. These misaligned primers can be extended by PolIV. Exhibits no 3'-5' exonuclease (proofreading) activity. May be involved in translesional synthesis, in conjunction with the beta clamp from PolIII. The chain is DNA polymerase IV from Clostridium perfringens (strain SM101 / Type A).